A 67-amino-acid polypeptide reads, in one-letter code: Protein SlyX homolog (67 aa).

The span at 48 to 60 (TSAPSTAAESNPQ) shows a compositional bias: polar residues. Positions 48–67 (TSAPSTAAESNPQHEIPPHY) are disordered.

The protein belongs to the SlyX family.

The protein is Protein SlyX homolog of Cupriavidus pinatubonensis (strain JMP 134 / LMG 1197) (Cupriavidus necator (strain JMP 134)).